Here is a 291-residue protein sequence, read N- to C-terminus: Light-independent protochlorophyllide reductase iron-sulfur ATP-binding protein (291 aa).

ATP-binding positions include glycine 10–threonine 15 and lysine 39. Mg(2+) is bound at residue serine 14. The [4Fe-4S] cluster site is built by cysteine 95 and cysteine 129. Asparagine 180–arginine 181 contributes to the ATP binding site.

Belongs to the NifH/BchL/ChlL family. Homodimer. Protochlorophyllide reductase is composed of three subunits; ChlL, ChlN and ChlB. It depends on [4Fe-4S] cluster as a cofactor.

It is found in the plastid. The protein resides in the chloroplast. It carries out the reaction chlorophyllide a + oxidized 2[4Fe-4S]-[ferredoxin] + 2 ADP + 2 phosphate = protochlorophyllide a + reduced 2[4Fe-4S]-[ferredoxin] + 2 ATP + 2 H2O. The protein operates within porphyrin-containing compound metabolism; chlorophyll biosynthesis (light-independent). Functionally, component of the dark-operative protochlorophyllide reductase (DPOR) that uses Mg-ATP and reduced ferredoxin to reduce ring D of protochlorophyllide (Pchlide) to form chlorophyllide a (Chlide). This reaction is light-independent. The L component serves as a unique electron donor to the NB-component of the complex, and binds Mg-ATP. The polypeptide is Light-independent protochlorophyllide reductase iron-sulfur ATP-binding protein (Pinus contorta (Shore pine)).